The following is a 1495-amino-acid chain: DNA-directed RNA polymerase subunit 1 (1495 aa).

This sequence belongs to the RNA polymerase beta' chain family.

Its subcellular location is the virion. The catalysed reaction is RNA(n) + a ribonucleoside 5'-triphosphate = RNA(n+1) + diphosphate. Its function is as follows. DNA-dependent RNA polymerase catalyzes the transcription of DNA into RNA using the four ribonucleoside triphosphates as substrates. In Acanthamoeba polyphaga (Amoeba), this protein is DNA-directed RNA polymerase subunit 1 (RPO1).